Here is a 193-residue protein sequence, read N- to C-terminus: MQNYQLVLASTSPFRQQILAKLKLPFVTAKPDCDETPLIGETPEHLLMRLAENKARSCFLADPSLVIGSDQVCVIDDQIIGKPLTTEKAVEQLLRQSGQAITFYTGLALFNNQTQQTQVLCDTFTVHFRTLSESMARRYVEAEQPLHCAGSFKSEGLGIALFERLEGDDPNSLIGLPLIKLIQLLENEGLNVI.

Catalysis depends on aspartate 70, which acts as the Proton acceptor.

It belongs to the Maf family. YceF subfamily. A divalent metal cation is required as a cofactor.

It localises to the cytoplasm. It carries out the reaction N(7)-methyl-GTP + H2O = N(7)-methyl-GMP + diphosphate + H(+). In terms of biological role, nucleoside triphosphate pyrophosphatase that hydrolyzes 7-methyl-GTP (m(7)GTP). May have a dual role in cell division arrest and in preventing the incorporation of modified nucleotides into cellular nucleic acids. This Vibrio cholerae serotype O1 (strain ATCC 39315 / El Tor Inaba N16961) protein is 7-methyl-GTP pyrophosphatase.